Reading from the N-terminus, the 1224-residue chain is Tyrosine-protein kinase abl-1 (1224 aa).

Positions 115-188 constitute an SH3 domain; that stretch reads SSAPLFVALY…PSNFIAPYNS (74 aa). One can recognise an SH2 domain in the interval 194 to 284; that stretch reads WYHGKISRSD…GLICLLMYPA (91 aa). In terms of domain architecture, Protein kinase spans 311 to 562; the sequence is IIMHNKLGGG…PRFRDIHFNL (252 aa). ATP is bound by residues 317 to 325, Lys-340, and 385 to 391; these read LGGGQYGDV and EFMCNGN. The Proton acceptor role is filled by Asp-432. The Kinase activation loop signature appears at 450-474; it reads DFGLARFMKEDTYTAHAGAKFPIKW. The segment covering 579–620 has biased composition (basic and acidic residues); it reads LKKNNDKKLESDKRRSNVRERSDSKSRHSSHHDRDRDRESLH. Disordered stretches follow at residues 579 to 671, 736 to 775, 796 to 881, 914 to 937, and 968 to 1016; these read LKKN…NTKP, KESTDADNEGAGSSSLSRTVSNDSLDTLPLPDSMNSSTYV, KRSE…DVGM, LRHVPKEESNTSSQEDLPLDATDN, and RPFS…RSNG. 2 stretches are compositionally biased toward polar residues: residues 639–655 and 746–760; these read SVSFFNPSTTSKVTSFR and AGSSSLSRTVSNDSL. Basic and acidic residues-rich tracts occupy residues 797–819 and 864–877; these read RSETPELDHIDSDTADETTKSEK and PDSKAEDSSDETTK. Polar residues predominate over residues 973–984; it reads QCPNNSTSSAIS. The span at 1001-1016 shows a compositional bias: basic and acidic residues; the sequence is YEERMKPELPRKRSNG.

Belongs to the protein kinase superfamily. Tyr protein kinase family. ABL subfamily. As to quaternary structure, interacts (via SH2 and SH3 domains) with mig-13; the interaction is direct. May interact with soem-1.

The protein localises to the cell membrane. The protein resides in the cytoplasm. The enzyme catalyses L-tyrosyl-[protein] + ATP = O-phospho-L-tyrosyl-[protein] + ADP + H(+). Functionally, functions downstream of migratory protein mig-13 and is involved in Q neuroblast migration during larval development. Recruited by mig-13 to the leading edge of Q neuroblasts and their descendents to signal downstream, likely to the wve-1 pathway, and direct migration along the anteroposterior body axis. Promotes germline cell apoptosis in response to oxidative, osmotic and heat shock stresses. In Caenorhabditis elegans, this protein is Tyrosine-protein kinase abl-1 (abl-1).